A 236-amino-acid chain; its full sequence is Small ribosomal subunit protein uS2c (236 aa).

It belongs to the universal ribosomal protein uS2 family.

Its subcellular location is the plastid. The protein localises to the chloroplast. The protein is Small ribosomal subunit protein uS2c (rps2) of Chaetosphaeridium globosum (Charophycean green alga).